Consider the following 118-residue polypeptide: Large ribosomal subunit protein bL20 (118 aa).

The protein belongs to the bacterial ribosomal protein bL20 family.

Binds directly to 23S ribosomal RNA and is necessary for the in vitro assembly process of the 50S ribosomal subunit. It is not involved in the protein synthesizing functions of that subunit. This chain is Large ribosomal subunit protein bL20, found in Edwardsiella ictaluri (strain 93-146).